The primary structure comprises 877 residues: TSET complex member tstB (877 aa).

2 disordered regions span residues 398 to 437 and 522 to 557; these read HLHHYHQGGSGTVGGSVPSSSSSSSSSSNITTSALSSGSS and TGLPNPISNNNNSSNNTKDQSTTTTTSTTSSSSNSI. 2 stretches are compositionally biased toward low complexity: residues 412-437 and 529-556; these read GSVPSSSSSSSSSSNITTSALSSGSS and SNNNNSSNNTKDQSTTTTTSTTSSSSNS.

Component of the TSET complex, a heterohexamer composed of tstA, tstB, tstC, tstD, tstE and tstF, which may act in plasma membrane turnover. tstA, tstB, tstC and tstD are likely to be the core complex members with tstE and tstF acting as associated scaffold proteins.

This is TSET complex member tstB from Dictyostelium discoideum (Social amoeba).